Here is a 572-residue protein sequence, read N- to C-terminus: Proline--tRNA ligase (572 aa).

It belongs to the class-II aminoacyl-tRNA synthetase family. ProS type 1 subfamily. As to quaternary structure, homodimer.

It is found in the cytoplasm. It catalyses the reaction tRNA(Pro) + L-proline + ATP = L-prolyl-tRNA(Pro) + AMP + diphosphate. Catalyzes the attachment of proline to tRNA(Pro) in a two-step reaction: proline is first activated by ATP to form Pro-AMP and then transferred to the acceptor end of tRNA(Pro). As ProRS can inadvertently accommodate and process non-cognate amino acids such as alanine and cysteine, to avoid such errors it has two additional distinct editing activities against alanine. One activity is designated as 'pretransfer' editing and involves the tRNA(Pro)-independent hydrolysis of activated Ala-AMP. The other activity is designated 'posttransfer' editing and involves deacylation of mischarged Ala-tRNA(Pro). The misacylated Cys-tRNA(Pro) is not edited by ProRS. This is Proline--tRNA ligase from Escherichia coli (strain K12 / MC4100 / BW2952).